The sequence spans 217 residues: Octanoyltransferase (217 aa).

One can recognise a BPL/LPL catalytic domain in the interval 32-207 (SESHDELWIV…TFSQLLGYQH (176 aa)). Substrate-binding positions include 71–78 (RGGQVTYH), 138–140 (SLG), and 151–153 (GLA). C169 acts as the Acyl-thioester intermediate in catalysis.

Belongs to the LipB family.

The protein resides in the cytoplasm. It catalyses the reaction octanoyl-[ACP] + L-lysyl-[protein] = N(6)-octanoyl-L-lysyl-[protein] + holo-[ACP] + H(+). It functions in the pathway protein modification; protein lipoylation via endogenous pathway; protein N(6)-(lipoyl)lysine from octanoyl-[acyl-carrier-protein]: step 1/2. Its function is as follows. Catalyzes the transfer of endogenously produced octanoic acid from octanoyl-acyl-carrier-protein onto the lipoyl domains of lipoate-dependent enzymes. Lipoyl-ACP can also act as a substrate although octanoyl-ACP is likely to be the physiological substrate. This chain is Octanoyltransferase, found in Shewanella baltica (strain OS155 / ATCC BAA-1091).